The following is a 443-amino-acid chain: METLASLYNEHLSTLQQRTRDVLERHQLDALLIHSGELQRLFLDDRDYPFKVNPQFKAWVPVTEVPNCWLWVDGVNTPKLWFYSPVDYWHSVEPLPDSFWTKNIDVQPLLNADDIAQQLPVQRERVAYIGYAQQRAQALGFSAENINPQPVLDYLHYYRSYKTDYELACMREAQKTAVVGHRAAYEAFQSGMSEFDINLAYLMATGHRDTDVPYDNIVALNEHSAVLHYTILQHQPPAEIRSFLIDAGAEYNGYAADLTRTYTADRDSDFAALISDLNTEQLALIDTIKSGERYTDYHVQMHQRIAKLLRTHNLVTGISEEAMVEQGITCPFLPHGLGHPLGLQVHDTAGFMQDDKGTNLNAPSKYPYLRCTRVLQPRMVLTIEPGLYFIDSLLAPWRIGEFSKHFNWDRIDALKPYGGIRIEDNIVIHDKRVENMTRDLKLA.

The Mn(2+) site is built by Asp-246, Asp-257, His-339, Glu-384, and Glu-423.

It belongs to the peptidase M24B family. Bacterial-type prolidase subfamily. It depends on Mn(2+) as a cofactor.

The enzyme catalyses Xaa-L-Pro dipeptide + H2O = an L-alpha-amino acid + L-proline. Its function is as follows. Splits dipeptides with a prolyl residue in the C-terminal position. The sequence is that of Xaa-Pro dipeptidase from Yersinia pestis bv. Antiqua (strain Nepal516).